A 1127-amino-acid polypeptide reads, in one-letter code: Genome polyprotein (1127 aa).

Positions 1–15 are interaction with host EXOC1; that stretch reads MNNQRKKARSTPFNM. Over 1–101 the chain is Cytoplasmic; the sequence is MNNQRKKARS…LNILNRRRRT (101 aa). The hydrophobic; homodimerization of capsid protein C stretch occupies residues 37–72; sequence MLQGRGPLKLFMALVALPRFLTIPPTAGILKRWGTI. A propeptide spans 101–114 (ER anchor for the capsid protein C, removed in mature form by serine protease NS3); the sequence is TAGVIIMLIPTVMA. The helical transmembrane segment at 102–122 threads the bilayer; sequence AGVIIMLIPTVMAFHLTTRNG. The Extracellular segment spans residues 123-238; the sequence is EPHMIVSRQE…GAWKRACRME (116 aa). An N-linked (GlcNAc...) asparagine; by host glycan is attached at N183. Residues 239–259 form a helical membrane-spanning segment; sequence TWILRHPGFTIMAAILAYTIG. Residues 260-265 lie on the Cytoplasmic side of the membrane; the sequence is TTHFQR. Residues 266–280 traverse the membrane as a helical segment; the sequence is GLILILQTAVAPSMT. Residues 281–725 lie on the Extracellular side of the membrane; it reads MRCIGISNRD…LHQVFGAIYG (445 aa). Disulfide bonds link C283–C310, C340–C401, C354–C385, and C372–C396. The N-linked (GlcNAc...) asparagine; by host glycan is linked to N347. A fusion peptide region spans residues 378–391; the sequence is DRGWGNGCGLFGKG. N433 is a glycosylation site (N-linked (GlcNAc...) asparagine; by host). 2 cysteine pairs are disulfide-bonded: C465–C565 and C582–C613. Residues 726–746 traverse the membrane as a helical segment; the sequence is AAFSGVSWTMKILIGVIITWI. At 747 to 754 the chain is on the cytoplasmic side; it reads GMNSRSTS. A helical transmembrane segment spans residues 755–773; it reads LSVSLVLVGVITLYLGAMV. Over 774–1127 the chain is Extracellular; sequence QADSGCVVSW…ENLVTSLVTA (354 aa). Intrachain disulfides connect C779/C790, C830/C918, C954/C998, C1055/C1104, and C1066/C1088. N-linked (GlcNAc...) asparagine; by host glycosylation is found at N905 and N982.

Homodimer. Interacts (via N-terminus) with host EXOC1 (via C-terminus); this interaction results in EXOC1 degradation through the proteasome degradation pathway. In terms of assembly, forms heterodimers with envelope protein E in the endoplasmic reticulum and Golgi. As to quaternary structure, homodimer; in the endoplasmic reticulum and Golgi. Interacts with protein prM. Interacts with non-structural protein 1. Homodimer; Homohexamer when secreted. Interacts with envelope protein E. Specific enzymatic cleavages in vivo yield mature proteins. Cleavages in the lumen of endoplasmic reticulum are performed by host signal peptidase, wereas cleavages in the cytoplasmic side are performed by the Serine protease NS3. Signal cleavage at the 2K-4B site requires a prior NS3 protease-mediated cleavage at the 4A-2K site. In terms of processing, cleaved in post-Golgi vesicles by a host furin, releasing the mature small envelope protein M, and peptide pr. This cleavage is incomplete as up to 30% of viral particles still carry uncleaved prM. Post-translationally, N-glycosylated. N-glycosylated. The excreted form is glycosylated and this is required for efficient secretion of the protein from infected cells.

The protein resides in the virion. The protein localises to the host nucleus. It localises to the host cytoplasm. It is found in the host perinuclear region. Its subcellular location is the secreted. The protein resides in the virion membrane. The protein localises to the host endoplasmic reticulum membrane. In terms of biological role, plays a role in virus budding by binding to the cell membrane and gathering the viral RNA into a nucleocapsid that forms the core of a mature virus particle. During virus entry, may induce genome penetration into the host cytoplasm after hemifusion induced by the surface proteins. Can migrate to the cell nucleus where it modulates host functions. Overcomes the anti-viral effects of host EXOC1 by sequestering and degrading the latter through the proteasome degradation pathway. Its function is as follows. Inhibits RNA silencing by interfering with host Dicer. Prevents premature fusion activity of envelope proteins in trans-Golgi by binding to envelope protein E at pH6.0. After virion release in extracellular space, gets dissociated from E dimers. Functionally, acts as a chaperone for envelope protein E during intracellular virion assembly by masking and inactivating envelope protein E fusion peptide. prM is the only viral peptide matured by host furin in the trans-Golgi network probably to avoid catastrophic activation of the viral fusion activity in acidic GolGi compartment prior to virion release. prM-E cleavage is inefficient, and many virions are only partially matured. These uncleaved prM would play a role in immune evasion. In terms of biological role, may play a role in virus budding. Exerts cytotoxic effects by activating a mitochondrial apoptotic pathway through M ectodomain. May display a viroporin activity. Its function is as follows. Binds to host cell surface receptor and mediates fusion between viral and cellular membranes. Envelope protein is synthesized in the endoplasmic reticulum in the form of heterodimer with protein prM. They play a role in virion budding in the ER, and the newly formed immature particle is covered with 60 spikes composed of heterodimer between precursor prM and envelope protein E. The virion is transported to the Golgi apparatus where the low pH causes dissociation of PrM-E heterodimers and formation of E homodimers. prM-E cleavage is inefficient, and many virions are only partially matured. These uncleaved prM would play a role in immune evasion. Involved in immune evasion, pathogenesis and viral replication. Once cleaved off the polyprotein, is targeted to three destinations: the viral replication cycle, the plasma membrane and the extracellular compartment. Essential for viral replication. Required for formation of the replication complex and recruitment of other non-structural proteins to the ER-derived membrane structures. Excreted as a hexameric lipoparticle that plays a role against host immune response. Antagonizing the complement function. Binds to the host macrophages and dendritic cells. Inhibits signal transduction originating from Toll-like receptor 3 (TLR3). Functionally, disrupts the host endothelial glycocalyx layer of host pulmonary microvascular endothelial cells, inducing degradation of sialic acid and shedding of heparan sulfate proteoglycans. NS1 induces expression of sialidases, heparanase, and activates cathepsin L, which activates heparanase via enzymatic cleavage. These effects are probably linked to the endothelial hyperpermeability observed in severe dengue disease. This Dengue virus type 2 (strain China/D2-04) (DENV-2) protein is Genome polyprotein.